The following is a 728-amino-acid chain: Methylmalonyl-CoA mutase large subunit (728 aa).

7 residues coordinate (R)-methylmalonyl-CoA: Tyr75, Met78, Arg82, Thr85, Arg87, Tyr89, and Ser114. Phe117 and Ala139 together coordinate cob(II)alamin. 2 residues coordinate (R)-methylmalonyl-CoA: Thr195 and Gln197. Cob(II)alamin-binding residues include Val206 and Arg207. (R)-methylmalonyl-CoA is bound by residues Arg207, His244, Arg283, and Ser285. Gly333, Glu370, Ala373, Gly609, His610, Asp611, Arg612, Ser655, Leu657, Gly686, and Thr709 together coordinate cob(II)alamin. The B12-binding domain maps to 597–728 (RPRILLAKMG…VKKLRASLDA (132 aa)).

Belongs to the methylmalonyl-CoA mutase family. Heterodimer of an alpha and a beta chain. Adenosylcob(III)alamin serves as cofactor.

The enzyme catalyses (R)-methylmalonyl-CoA = succinyl-CoA. Functionally, catalyzes the reversible conversion of succinyl-CoA to (R)-methylmalonyl-CoA through a radical mechanism. Is involved in the fermentation of pyruvate to propanoate that occurs in Propionibacteria. This is Methylmalonyl-CoA mutase large subunit (mutB) from Propionibacterium freudenreichii subsp. shermanii.